Here is a 395-residue protein sequence, read N- to C-terminus: tRNA (guanine-N(7)-)-methyltransferase (395 aa).

S-adenosyl-L-methionine-binding residues include E126, E151, and D178. The substrate site is built by K204 and D234.

The protein belongs to the class I-like SAM-binding methyltransferase superfamily. TrmB family.

The catalysed reaction is guanosine(46) in tRNA + S-adenosyl-L-methionine = N(7)-methylguanosine(46) in tRNA + S-adenosyl-L-homocysteine. The protein operates within tRNA modification; N(7)-methylguanine-tRNA biosynthesis. Functionally, catalyzes the formation of N(7)-methylguanine at position 46 (m7G46) in tRNA. The sequence is that of tRNA (guanine-N(7)-)-methyltransferase from Campylobacter fetus subsp. fetus (strain 82-40).